A 123-amino-acid chain; its full sequence is Homeobox protein CDX-1 (123 aa).

Positions 5–64 (KDKYRVVYTDHQRLELEKEFHYSRYITIRRKSELAANLGLTERQVKIWFQNRRAKERKVN) form a DNA-binding region, homeobox. An interaction with DNA region spans residues 8 to 29 (YRVVYTDHQRLELEKEFHYSRY). The interval 47–58 (RQVKIWFQNRRA) is interaction with 5-mCpG DNA. Over residues 57-68 (RAKERKVNKKKQ) the composition is skewed to basic residues. The segment at 57-123 (RAKERKVNKK…PVPVKEEFLP (67 aa)) is disordered.

Belongs to the Caudal homeobox family. Intestinal epithelium.

Its subcellular location is the nucleus. In terms of biological role, plays a role in transcriptional regulation. Involved in activated KRAS-mediated transcriptional activation of PRKD1 in colorectal cancer (CRC) cells. Binds to the PRKD1 promoter in colorectal cancer (CRC) cells. Could play a role in the terminal differentiation of the intestine. Binds preferentially to methylated DNA. The sequence is that of Homeobox protein CDX-1 (Cdx1) from Rattus norvegicus (Rat).